The sequence spans 529 residues: Na(+)/H(+) antiporter NhaB (529 aa).

12 helical membrane passes run 13-33 (FLGKAPDWYKVAIISFLIINP), 34-54 (IVFFFVDPFVAGWLLVVEFIF), 90-110 (LVANIEVLLLLVFMVAGIYFM), 113-133 (LLLFIFTKILLGIRSKAILSL), 149-166 (LTVIAVVISVAVGFYSIY), 205-225 (LLMHAGVGTALGGVTTMVGEP), 241-261 (FLIRMAPVTLPVFVCGLLTCF), 306-326 (GLIAVWLIVGLALHLAAVGLI), 327-347 (GLSVIILATAFTGVIEEHSLG), 351-371 (EEALPFTALLAVFFSIVAVII), 451-471 (ATPNGQAAFLFLLTSALAPLI), and 479-499 (VIMALPYTIVLALVGLFGIVF).

It belongs to the NhaB Na(+)/H(+) (TC 2.A.34) antiporter family.

The protein resides in the cell inner membrane. The enzyme catalyses 2 Na(+)(in) + 3 H(+)(out) = 2 Na(+)(out) + 3 H(+)(in). Functionally, na(+)/H(+) antiporter that extrudes sodium in exchange for external protons. This chain is Na(+)/H(+) antiporter NhaB, found in Vibrio vulnificus (strain YJ016).